Here is a 336-residue protein sequence, read N- to C-terminus: Potassium channel subfamily K member 1 (336 aa).

Residues 1–20 (MLQSLAGSSCVRLVERHRSA) are Cytoplasmic-facing. A helical transmembrane segment spans residues 21-41 (WCFGFLVLGYLLYLVFGAVVF). Residues 42-103 (SSVELPYEDL…SNASGNWNWD (62 aa)) are Extracellular-facing. Asn-95 is a glycosylation site (N-linked (GlcNAc...) asparagine). The segment at residues 104 to 116 (FTSALFFASTVLS) is an intramembrane region (helical). The stretch at 117 to 122 (TTGYGH) is an intramembrane region. Positions 117 to 122 (TTGYGH) are selectivity filter 1. Topologically, residues 123–132 (TVPLSDGGKA) are extracellular. A helical transmembrane segment spans residues 133-156 (FCIIYSVIGIPFTLLFLTAVVQRI). The Cytoplasmic segment spans residues 157–181 (TVHVTRRPVLYFHIRWGFSKQVVAI). A helical membrane pass occupies residues 182 to 202 (VHAVLLGFVTVSCFFFIPAAV). Over 203 to 211 (FSVLEDDWN) the chain is Extracellular. Positions 212–224 (FLESFYFCFISLS) form an intramembrane region, helical. A selectivity filter 2 region spans residues 225-230 (TIGLGD). An intramembrane segment occupies 225–231 (TIGLGDY). Over 232–243 (VPGEGYNQKFRE) the chain is Extracellular. A helical membrane pass occupies residues 244-267 (LYKIGITCYLLLGLIAMLVVLETF). Residues 268–336 (CELHELKKFR…SACVDGPANH (69 aa)) are Cytoplasmic-facing. Lys-274 is covalently cross-linked (Glycyl lysine isopeptide (Lys-Gly) (interchain with G-Cter in SUMO)). Positions 293-299 (IIEHDQL) are important for intracellular retention in recycling endosomes. Ser-326 is subject to Phosphoserine.

This sequence belongs to the two pore domain potassium channel (TC 1.A.1.8) family. As to quaternary structure, homodimer; disulfide-linked. Heterodimer with KCNK2; disulfide-linked. In astrocytes, forms mostly heterodimeric potassium channels with KCNK2, with only a minor proportion of functional channels containing homodimeric KCNK1. Interacts with KCNK3 and KCNK9, forming functional heterodimeric channels. Interacts with GNG4. Identified in a complex with PSD and ARF6; interacts only with PSD that is bound to ARF6. Interacts with UBE2I. In terms of processing, sumoylation is controversial. Sumoylated by UBE2I. Not sumoylated when expressed in xenopus oocytes or mammalian cells. Sumoylation inactivates the channel, but does not interfere with expression at the cell membrane. Sumoylation of a single subunit is sufficient to silence the dimeric channel. Sumoylation of KCNK1 is sufficient to silence heterodimeric channels formed by KCNK1 and KCNK3 or KCNK9. Desumoylated by SENP1; this activates the channel. Desumoylated by SENP1; this strongly increases halothane-mediated activation of heterodimeric channels formed with KCNK9. SENP1 treatment has no effect. Detected in bronchial epithelial cells. Detected in heart left atrium and left ventricle. Detected in cardiac myocytes (at protein level). Widely expressed with high levels in heart, brain and kidney, and lower levels in colon, ovary, placenta, lung and liver. Highly expressed in cerebellum, and detected at lower levels in amygdala, caudate nucleus, brain cortex, hippocampus, putamen, substantia nigra, thalamus, dorsal root ganglion, spinal cord, pituitary, heart, kidney, lung, placenta, pancreas, stomach, small intestine, uterus and prostate. Detected in right and left heart ventricle and atrium, and in heart Purkinje fibers.

Its subcellular location is the cell membrane. It is found in the recycling endosome. It localises to the synaptic cell membrane. The protein resides in the cytoplasmic vesicle. The protein localises to the perikaryon. Its subcellular location is the cell projection. It is found in the dendrite. It localises to the apical cell membrane. The catalysed reaction is K(+)(in) = K(+)(out). It carries out the reaction NH4(+)(in) = NH4(+)(out). The enzyme catalyses Na(+)(in) = Na(+)(out). It catalyses the reaction Rb(+)(in) = Rb(+)(out). The catalysed reaction is Cs(+)(in) = Cs(+)(out). It carries out the reaction Li(+)(in) = Li(+)(out). The enzyme catalyses L-glutamate(out) = L-glutamate(in). It catalyses the reaction chloride(in) = chloride(out). Its activity is regulated as follows. Inhibited by Ba(2+) ions and quinidine. Inhibited by quinine. Is slightly inhibited by 10 mM tetraethylammonium (TEA), and only marginally inhibited by 4-aminopyridine, charybdotoxin and dendrotoxin. Lowering the extracellular pH to below 6.5 transiently activates the channel, and then inhibits channel activity. Inhibited when the intracellular pH is decreased down to pH 6.0, but this may be due to indirect effects. Ion channel that contributes to passive transmembrane potassium transport and to the regulation of the resting membrane potential in brain astrocytes, but also in kidney and in other tissues. Forms dimeric channels through which potassium ions pass in accordance with their electrochemical gradient. The channel is selective for K(+) ions at physiological potassium concentrations and at neutral pH, but becomes permeable to Na(+) at subphysiological K(+) levels and upon acidification of the extracellular medium. The homodimer has very low potassium channel activity, when expressed in heterologous systems, and can function as weakly inward rectifying potassium channel. Channel activity is modulated by activation of serotonin receptors. Heterodimeric channels containing KCNK1 and KCNK2 have much higher activity, and may represent the predominant form in astrocytes. Heterodimeric channels containing KCNK1 and KCNK3 or KCNK9 have much higher activity. Heterodimeric channels formed by KCNK1 and KCNK9 may contribute to halothane-sensitive currents. Mediates outward rectifying potassium currents in dentate gyrus granule cells and contributes to the regulation of their resting membrane potential. Contributes to the regulation of action potential firing in dentate gyrus granule cells and down-regulates their intrinsic excitability. In astrocytes, the heterodimer formed by KCNK1 and KCNK2 is required for rapid glutamate release in response to activation of G-protein coupled receptors, such as F2R and CNR1. Required for normal ion and water transport in the kidney. Contributes to the regulation of the resting membrane potential of pancreatic beta cells. The low channel activity of homodimeric KCNK1 may be due to sumoylation. The low channel activity may be due to rapid internalization from the cell membrane and retention in recycling endosomes. Permeable to monovalent cations with ion selectivity for K(+) &gt; Rb(+) &gt;&gt; NH4(+) &gt;&gt; Cs(+) = Na(+) = Li(+). This is Potassium channel subfamily K member 1 (KCNK1) from Homo sapiens (Human).